A 372-amino-acid polypeptide reads, in one-letter code: sn-glycerol-3-phosphate import ATP-binding protein UgpC (372 aa).

One can recognise an ABC transporter domain in the interval 2–233 (LDIQQLVKTY…PASTFVASFI (232 aa)). 35–42 (GPSGCGKS) is an ATP binding site.

The protein belongs to the ABC transporter superfamily. sn-glycerol-3-phosphate importer (TC 3.A.1.1.3) family. The complex is composed of two ATP-binding proteins (UgpC), two transmembrane proteins (UgpA and UgpE) and a solute-binding protein (UgpB).

It localises to the cell inner membrane. It carries out the reaction sn-glycerol 3-phosphate(out) + ATP + H2O = sn-glycerol 3-phosphate(in) + ADP + phosphate + H(+). In terms of biological role, part of the ABC transporter complex UgpBAEC involved in sn-glycerol-3-phosphate (G3P) import. Responsible for energy coupling to the transport system. The sequence is that of sn-glycerol-3-phosphate import ATP-binding protein UgpC from Vibrio vulnificus (strain YJ016).